The chain runs to 191 residues: Early nodulin-like protein 8 (191 aa).

The signal sequence occupies residues 1–22; it reads MGVMSLSKTMVVVVLQVMILLG. A Phytocyanin domain is found at 31–133; that stretch reads TLYKVGDLDA…YQKLLVSVGT (103 aa). Cysteines 87 and 121 form a disulfide. N-linked (GlcNAc...) asparagine glycans are attached at residues Asn-104 and Asn-108. Ser-165 is lipidated: GPI-anchor amidated serine. The propeptide at 166–191 is removed in mature form; the sequence is SASSSLISAFSTVAASLACAVVGAIM.

The protein belongs to the early nodulin-like (ENODL) family. In terms of tissue distribution, mostly expressed in seedlings and roots, and, to a lower extent, in leaves, flowers, stems and seeds.

Its subcellular location is the cell membrane. In terms of biological role, may act as a carbohydrate transporter. The chain is Early nodulin-like protein 8 from Arabidopsis thaliana (Mouse-ear cress).